The following is a 408-amino-acid chain: Phosphoenolpyruvate/phosphate translocator 1, chloroplastic (408 aa).

A chloroplast-targeting transit peptide spans 1-85 (MQSSAVFSLS…SLDTNRFRTA (85 aa)). A86 is modified (N-acetylalanine). Helical transmembrane passes span 105 to 125 (VLEL…FNIY), 137 to 157 (MTVT…MWVL), 165 to 185 (ISGA…LGNL), 198 to 218 (FTHT…AMFL), 222 to 242 (PTPW…LASI), 283 to 303 (ITLF…VTFF), 324 to 346 (IYTK…YMIL), and 377 to 396 (VSPV…FLYS). Positions 124 to 241 (IYNKQVLKAL…PIVGGVALAS (118 aa)) constitute an EamA domain.

The protein belongs to the TPT transporter family. PPT (TC 2.A.7.9) subfamily. Expressed in root columella, lateral root cap and root vasculature tissue. In leaves, highly expressed in xylem parenchyma cells. In flowers, expressed in sepals, petals, filaments of the stamens, anthers and stigma.

It localises to the plastid. The protein localises to the chloroplast membrane. Its function is as follows. Phosphoenolpyruvate/phosphate translocator that transports phosphoenolpyruvate (PEP), 2-phosphoglycerate, 3-phosphoglycerate and dihydroxyacetone phosphate. Imports PEP to the chloroplast stroma as one substrate of the shikimate pathway, from which aromatic amino acids and a variety of secondary products derive. Required for correct leaf mesophyll cell development and expression of chlorophyll a/b binding protein 3 (CAB3). In Arabidopsis thaliana (Mouse-ear cress), this protein is Phosphoenolpyruvate/phosphate translocator 1, chloroplastic (PPT1).